A 403-amino-acid chain; its full sequence is Imidazolonepropionase (403 aa).

Residues histidine 69 and histidine 71 each coordinate Fe(3+). Zn(2+) contacts are provided by histidine 69 and histidine 71. The 4-imidazolone-5-propanoate site is built by arginine 78, tyrosine 141, and histidine 174. Tyrosine 141 is an N-formimidoyl-L-glutamate binding site. Histidine 239 provides a ligand contact to Fe(3+). Position 239 (histidine 239) interacts with Zn(2+). Residue glutamine 242 participates in 4-imidazolone-5-propanoate binding. Fe(3+) is bound at residue aspartate 314. Position 314 (aspartate 314) interacts with Zn(2+). Positions 316 and 318 each coordinate N-formimidoyl-L-glutamate. Serine 319 contacts 4-imidazolone-5-propanoate.

It belongs to the metallo-dependent hydrolases superfamily. HutI family. Zn(2+) serves as cofactor. Fe(3+) is required as a cofactor.

It is found in the cytoplasm. The enzyme catalyses 4-imidazolone-5-propanoate + H2O = N-formimidoyl-L-glutamate. Its pathway is amino-acid degradation; L-histidine degradation into L-glutamate; N-formimidoyl-L-glutamate from L-histidine: step 3/3. Catalyzes the hydrolytic cleavage of the carbon-nitrogen bond in imidazolone-5-propanoate to yield N-formimidoyl-L-glutamate. It is the third step in the universal histidine degradation pathway. This chain is Imidazolonepropionase, found in Legionella pneumophila (strain Paris).